Consider the following 193-residue polypeptide: MAYSWDNRVKYVVRYMYDIDNNGFLDKNDFECLAVRNTLIEGRGEFSADAYANNQKIMRNLWNEIAELADFNKDGEVTVDEFKQAVQKHCQGKKYGDFPGAFKVFIANQFKAIDVNGDGKVGLDEYRLDCITRSAFAEVKEIDDAYNKLTTEDDRKAGGLTLERYQDLYAQFISNPDESCSACYLFGPLKVVQ.

2 igE-binding epitope regions span residues 10 to 36 and 49 to 72; these read KYVV…LAVR and DAYA…ADFN. 3 consecutive EF-hand domains span residues 16–40, 57–92, and 101–136; these read MYDI…NTLI, IMRN…HCQG, and AFKV…RSAF. Ca(2+) contacts are provided by D18, D20, N22, D29, D70, N72, D74, E76, E81, D114, N116, D118, K120, and E125. The tract at residues 130–147 is igE-binding epitope; sequence CITRSAFAEVKEIDDAYN.

SCPs from crayfish, lobster, and shrimp are polymorphic dimers; three isotypes (alpha-alpha, alpha-beta, and beta-beta) have been identified. As to expression, expressed in tail muscle (at protein level).

Functionally, like parvalbumins, SCPs seem to be more abundant in fast contracting muscles, but no functional relationship can be established from this distribution. In Penaeus vannamei (Whiteleg shrimp), this protein is Sarcoplasmic calcium-binding protein, alpha chain.